Here is a 549-residue protein sequence, read N- to C-terminus: Alpha-amylase (549 aa).

Residues M1–A34 form the signal peptide. D139, D196, A218, D220, D231, and D237 together coordinate Ca(2+). A Na(+)-binding site is contributed by D196. Residues D220, D231, D237, and L238 each contribute to the Na(+) site. D239 contributes to the Ca(2+) binding site. The active-site Nucleophile is D268. H272 contacts Ca(2+). Residue E298 is the Proton donor of the active site. 5 residues coordinate Ca(2+): G337, F339, S440, D441, and D464.

This sequence belongs to the glycosyl hydrolase 13 family. As to quaternary structure, monomer. The cofactor is Ca(2+). Requires Na(+) as cofactor.

Its subcellular location is the secreted. The enzyme catalyses Endohydrolysis of (1-&gt;4)-alpha-D-glucosidic linkages in polysaccharides containing three or more (1-&gt;4)-alpha-linked D-glucose units.. The sequence is that of Alpha-amylase (amyS) from Geobacillus stearothermophilus (Bacillus stearothermophilus).